We begin with the raw amino-acid sequence, 196 residues long: Probable molybdenum cofactor guanylyltransferase (196 aa).

GTP is bound by residues 7 to 9, lysine 19, aspartate 68, and aspartate 93; that span reads LAG. Aspartate 93 provides a ligand contact to Mg(2+).

This sequence belongs to the MobA family. Mg(2+) is required as a cofactor.

It is found in the cytoplasm. It carries out the reaction Mo-molybdopterin + GTP + H(+) = Mo-molybdopterin guanine dinucleotide + diphosphate. Functionally, transfers a GMP moiety from GTP to Mo-molybdopterin (Mo-MPT) cofactor (Moco or molybdenum cofactor) to form Mo-molybdopterin guanine dinucleotide (Mo-MGD) cofactor. This Pyrococcus furiosus (strain ATCC 43587 / DSM 3638 / JCM 8422 / Vc1) protein is Probable molybdenum cofactor guanylyltransferase.